A 365-amino-acid chain; its full sequence is Peptide chain release factor 2 (365 aa).

Position 249 is an N5-methylglutamine (Gln-249).

The protein belongs to the prokaryotic/mitochondrial release factor family. Post-translationally, methylated by PrmC. Methylation increases the termination efficiency of RF2.

It is found in the cytoplasm. Peptide chain release factor 2 directs the termination of translation in response to the peptide chain termination codons UGA and UAA. The sequence is that of Peptide chain release factor 2 from Acholeplasma laidlawii (strain PG-8A).